A 139-amino-acid chain; its full sequence is ATP synthase epsilon chain (139 aa).

The protein belongs to the ATPase epsilon chain family. In terms of assembly, F-type ATPases have 2 components, CF(1) - the catalytic core - and CF(0) - the membrane proton channel. CF(1) has five subunits: alpha(3), beta(3), gamma(1), delta(1), epsilon(1). CF(0) has three main subunits: a, b and c.

The protein resides in the cell membrane. Produces ATP from ADP in the presence of a proton gradient across the membrane. The polypeptide is ATP synthase epsilon chain (Pediococcus pentosaceus (strain ATCC 25745 / CCUG 21536 / LMG 10740 / 183-1w)).